A 386-amino-acid polypeptide reads, in one-letter code: S-adenosylmethionine synthase (386 aa).

H16 contributes to the ATP binding site. D18 is a Mg(2+) binding site. E44 contributes to the K(+) binding site. L-methionine is bound by residues E57 and Q100. The flexible loop stretch occupies residues 100–110 (QSGDIAMGVDE). ATP is bound by residues 165–167 (DAK), D240, 246–247 (RK), A263, and K267. Residue D240 coordinates L-methionine. K271 serves as a coordination point for L-methionine.

Belongs to the AdoMet synthase family. In terms of assembly, homotetramer; dimer of dimers. Mg(2+) serves as cofactor. The cofactor is K(+).

It is found in the cytoplasm. It carries out the reaction L-methionine + ATP + H2O = S-adenosyl-L-methionine + phosphate + diphosphate. It functions in the pathway amino-acid biosynthesis; S-adenosyl-L-methionine biosynthesis; S-adenosyl-L-methionine from L-methionine: step 1/1. In terms of biological role, catalyzes the formation of S-adenosylmethionine (AdoMet) from methionine and ATP. The overall synthetic reaction is composed of two sequential steps, AdoMet formation and the subsequent tripolyphosphate hydrolysis which occurs prior to release of AdoMet from the enzyme. In Hahella chejuensis (strain KCTC 2396), this protein is S-adenosylmethionine synthase.